A 376-amino-acid polypeptide reads, in one-letter code: Protein RecA (376 aa).

Residue 79-86 coordinates ATP; that stretch reads GPESSGKT. A disordered region spans residues 357–376; sequence AAARAATDKPVETKGANAAA.

This sequence belongs to the RecA family.

It is found in the cytoplasm. In terms of biological role, can catalyze the hydrolysis of ATP in the presence of single-stranded DNA, the ATP-dependent uptake of single-stranded DNA by duplex DNA, and the ATP-dependent hybridization of homologous single-stranded DNAs. It interacts with LexA causing its activation and leading to its autocatalytic cleavage. In Synechococcus sp. (strain CC9902), this protein is Protein RecA.